The following is a 344-amino-acid chain: MPVEKFLKDFTIPEKIEFLKSQDDGSYGKFTIYPFERGFGVTIGNTLRRVLLSSIEGYAITAMRIQSNNKDSSSKVVSSEFDLIPGVSEDTLEVIANIKNIHLKLGEGEQRKIISFSVSGKDTKVLKASHFERDGVEVFNRDLVIATLSQDVNLDLEFQINYGRGYVSSEQNSKYLEEVNVIALDSIFSPIEKVSYSVEDTRVGQRSDYDKLVMEIWTTGVISAKDAIKKAASIIREFLFPLIDFEDNINTSFEKSKSESSNLLDMSIEKLDLSVRSLNCLAKENVRTLGELISKNAEELSKARNFGKKSLEEIIEKLSSYQLFLGMSKEDALFVLSKNVKISE.

The tract at residues methionine 1–glutamate 246 is alpha N-terminal domain (alpha-NTD). Residues glutamate 259 to glutamate 344 form an alpha C-terminal domain (alpha-CTD) region.

This sequence belongs to the RNA polymerase alpha chain family. As to quaternary structure, homodimer. The RNAP catalytic core consists of 2 alpha, 1 beta, 1 beta' and 1 omega subunit. When a sigma factor is associated with the core the holoenzyme is formed, which can initiate transcription.

It carries out the reaction RNA(n) + a ribonucleoside 5'-triphosphate = RNA(n+1) + diphosphate. Functionally, DNA-dependent RNA polymerase catalyzes the transcription of DNA into RNA using the four ribonucleoside triphosphates as substrates. This Borrelia garinii subsp. bavariensis (strain ATCC BAA-2496 / DSM 23469 / PBi) (Borreliella bavariensis) protein is DNA-directed RNA polymerase subunit alpha.